We begin with the raw amino-acid sequence, 335 residues long: Malate dehydrogenase 1 (335 aa).

NAD(+) is bound by residues G11–G16 and D35. Residues R97 and R103 each contribute to the substrate site. Residues N110 and V133–N135 each bind NAD(+). N135 and R166 together coordinate substrate. The Proton acceptor role is filled by H190.

This sequence belongs to the LDH/MDH superfamily. MDH type 3 family.

It carries out the reaction (S)-malate + NAD(+) = oxaloacetate + NADH + H(+). Its function is as follows. Catalyzes the reversible oxidation of malate to oxaloacetate. The chain is Malate dehydrogenase 1 (mdh1) from Aquifex aeolicus (strain VF5).